Consider the following 498-residue polypeptide: COP9 signalosome complex subunit 1 (498 aa).

Residues 249–430 (SYLEAANSFI…HVLVSTQGDK (182 aa)) form the PCI domain.

The protein belongs to the CSN1 family. Component of the COP9 signalosome (CSN) complex.

Its subcellular location is the cytoplasm. It is found in the nucleus. Its function is as follows. Component of the COP9 signalosome (CSN) complex that acts as an regulator of the ubiquitin (Ubl) conjugation pathway by mediating the deneddylation of the cullin subunit of SCF-type E3 ubiquitin-protein ligase complexes. The CSN complex seems to link protein degradation to sexual development. Required for fruit body formation. The polypeptide is COP9 signalosome complex subunit 1 (csnA) (Emericella nidulans (strain FGSC A4 / ATCC 38163 / CBS 112.46 / NRRL 194 / M139) (Aspergillus nidulans)).